The following is a 207-amino-acid chain: Segregation and condensation protein B (207 aa).

The disordered stretch occupies residues 173–207 (DDTAESDNDSADLYYRQFEQTLNETGPETAPKGEQ).

This sequence belongs to the ScpB family. In terms of assembly, homodimer. Homodimerization may be required to stabilize the binding of ScpA to the Smc head domains. Component of a cohesin-like complex composed of ScpA, ScpB and the Smc homodimer, in which ScpA and ScpB bind to the head domain of Smc. The presence of the three proteins is required for the association of the complex with DNA.

The protein resides in the cytoplasm. Participates in chromosomal partition during cell division. May act via the formation of a condensin-like complex containing Smc and ScpA that pull DNA away from mid-cell into both cell halves. This chain is Segregation and condensation protein B, found in Latilactobacillus sakei subsp. sakei (strain 23K) (Lactobacillus sakei subsp. sakei).